The chain runs to 196 residues: Small ribosomal subunit protein uS4c (196 aa).

Positions 16-40 (GALPGLTRKTPKSGSNLKKKFHSGK) are disordered. The S4 RNA-binding domain maps to 89 to 152 (MRLDNTLFRL…RSKDLVRNSI (64 aa)).

It belongs to the universal ribosomal protein uS4 family. In terms of assembly, part of the 30S ribosomal subunit. Contacts protein S5. The interaction surface between S4 and S5 is involved in control of translational fidelity.

The protein localises to the plastid. It localises to the chloroplast. In terms of biological role, one of the primary rRNA binding proteins, it binds directly to 16S rRNA where it nucleates assembly of the body of the 30S subunit. Functionally, with S5 and S12 plays an important role in translational accuracy. The protein is Small ribosomal subunit protein uS4c (rps4) of Anthoxanthum odoratum (Sweet vernal grass).